Reading from the N-terminus, the 120-residue chain is UPF0231 protein YE0706 (120 aa).

It belongs to the UPF0231 family.

This is UPF0231 protein YE0706 from Yersinia enterocolitica serotype O:8 / biotype 1B (strain NCTC 13174 / 8081).